The sequence spans 331 residues: Small ribosomal subunit protein uS2 (331 aa).

The protein belongs to the universal ribosomal protein uS2 family.

The protein is Small ribosomal subunit protein uS2 of Rhodopseudomonas palustris (strain HaA2).